Consider the following 195-residue polypeptide: Small ribosomal subunit protein uS4c (195 aa).

In terms of domain architecture, S4 RNA-binding spans 82 to 143; sequence MRLDNILFRL…KQRSKALIQN (62 aa).

Belongs to the universal ribosomal protein uS4 family. In terms of assembly, part of the 30S ribosomal subunit. Contacts protein S5. The interaction surface between S4 and S5 is involved in control of translational fidelity.

Its subcellular location is the plastid. It is found in the chloroplast. Its function is as follows. One of the primary rRNA binding proteins, it binds directly to 16S rRNA where it nucleates assembly of the body of the 30S subunit. With S5 and S12 plays an important role in translational accuracy. This Watsonia angusta protein is Small ribosomal subunit protein uS4c (rps4).